The following is a 265-amino-acid chain: Gamma-secretase subunit APH-1A (265 aa).

The Lumenal portion of the chain corresponds to 1–2; sequence MG. A helical transmembrane segment spans residues 3 to 23; the sequence is AAVFFGCTFVAFGPAFSLFLI. Residues 24–31 lie on the Cytoplasmic side of the membrane; sequence TVAGDPLR. The chain crosses the membrane as a helical span at residues 32-52; it reads VIILVAGAFFWLVSLLLASVV. The Lumenal segment spans residues 53 to 68; that stretch reads WFILVHVTDRSDARLQ. A helical membrane pass occupies residues 69–89; that stretch reads YGLLIFGAAVSVLLQEVFRFA. At 90-118 the chain is on the cytoplasmic side; that stretch reads YYKLLKKADEGLASLSEDGRSPISIRQMA. The chain crosses the membrane as a helical span at residues 119–139; that stretch reads YVSGLSFGIISGVFSVINILA. At 140 to 158 the chain is on the lumenal side; sequence DALGPGVVGIHGDSPYYFL. A helical membrane pass occupies residues 159–179; sequence TSAFLTAAIILLHTFWGVVFF. Over 180-186 the chain is Cytoplasmic; the sequence is DACERRR. A helical transmembrane segment spans residues 187–207; sequence YWALGLVVGSHLLTSGLTFLN. Residues 208-213 lie on the Lumenal side of the membrane; that stretch reads PWYEAS. Residues 214 to 234 traverse the membrane as a helical segment; it reads LLPIYAVTVSMGLWAFITAGG. At 235 to 265 the chain is on the cytoplasmic side; that stretch reads SLRSIQRSLSCRRQEDSRVMVYSALRIPPED.

Belongs to the APH-1 family. In terms of assembly, the functional gamma-secretase complex is composed of at least four polypeptides: a presenilin homodimer (PSEN1 or PSEN2), nicastrin (NCSTN), APH1 (APH1A or APH1B) and PSENEN/PEN2.

The protein localises to the endoplasmic reticulum membrane. It localises to the golgi apparatus. It is found in the golgi stack membrane. Its function is as follows. Non-catalytic subunit of the gamma-secretase complex, an endoprotease complex that catalyzes the intramembrane cleavage of integral membrane proteins such as Notch receptors and APP (amyloid-beta precursor protein). Required for normal gamma-secretase assembly. The gamma-secretase complex plays a role in Notch and Wnt signaling cascades and regulation of downstream processes via its role in processing key regulatory proteins, and by regulating cytosolic CTNNB1 levels. This chain is Gamma-secretase subunit APH-1A (Aph1a), found in Mus musculus (Mouse).